The sequence spans 967 residues: Nonsense-mediated mRNA decay factor SMG8 (967 aa).

The segment at leucine 627–serine 702 is disordered. The segment covering asparagine 628–serine 639 has biased composition (acidic residues). Low complexity predominate over residues arginine 643–serine 666. Polar residues predominate over residues alanine 686–serine 702.

The protein belongs to the SMG8 family.

Its function is as follows. Involved in nonsense-mediated decay (NMD) of mRNAs containing premature stop codons. Probable component of kinase complex containing nonC and recruited to stalled ribosomes. In Drosophila mojavensis (Fruit fly), this protein is Nonsense-mediated mRNA decay factor SMG8.